Consider the following 1240-residue polypeptide: ABC transporter B family member 17 (1240 aa).

One can recognise an ABC transmembrane type-1 1 domain in the interval 35 to 324; sequence MALGLIGAVG…SLSNLKYFSE (290 aa). The chain crosses the membrane as a helical span at residues 36 to 56; it reads ALGLIGAVGDGFITPVVVFIF. Residue asparagine 70 is glycosylated (N-linked (GlcNAc...) asparagine). A run of 5 helical transmembrane segments spans residues 81 to 101, 158 to 180, 184 to 206, 264 to 284, and 296 to 316; these read VVAL…EGYC, LPNF…ILMW, IVGF…ALVS, GITI…TWYG, and GTVF…GQSL. Positions 359-595 constitute an ABC transporter 1 domain; sequence VEFNHVKFTY…IDGQYTSLVS (237 aa). 394–401 provides a ligand contact to ATP; it reads GGSGSGKS. Residues asparagine 542, asparagine 609, and asparagine 642 are each glycosylated (N-linked (GlcNAc...) asparagine). The ABC transmembrane type-1 2 domain occupies 672–960; it reads ALYGCLSAAL…AGTMTTDLAR (289 aa). 2 helical membrane-spanning segments follow: residues 681 to 701 and 714 to 734; these read LVGV…SVFF and IYVL…ISQH. A glycan (N-linked (GlcNAc...) asparagine) is linked at asparagine 769. 4 helical membrane passes run 793–815, 817–839, 896–919, and 923–943; these read MSLL…VIAW, LAIV…RVLL, WLAG…NFWY, and LIAD…IFVT. Residues 995 to 1233 enclose the ABC transporter 2 domain; sequence ITFLNVDFAY…GPTGTYFSLA (239 aa). An N-linked (GlcNAc...) asparagine glycan is attached at asparagine 1015. Residue 1030–1037 coordinates ATP; sequence GTSGSGKS.

It belongs to the ABC transporter superfamily. ABCB family. Multidrug resistance exporter (TC 3.A.1.201) subfamily.

It localises to the membrane. The polypeptide is ABC transporter B family member 17 (ABCB17) (Arabidopsis thaliana (Mouse-ear cress)).